The chain runs to 124 residues: uncharacterized protein (124 aa).

The region spanning 42–118 (DKGGIFMFYN…INTQHSKYNI (77 aa)) is the GIY-YIG domain.

This is an uncharacterized protein from Bacillus subtilis (strain 168).